Reading from the N-terminus, the 130-residue chain is Small ribosomal subunit protein uS9 (130 aa).

This sequence belongs to the universal ribosomal protein uS9 family.

This chain is Small ribosomal subunit protein uS9, found in Polaromonas sp. (strain JS666 / ATCC BAA-500).